Consider the following 331-residue polypeptide: MASLKNKHFMIGLSLTFIVALFSFLAAKLPILDKVGALTIAILIAILYRHFKGYPEQYSSGITFSSKYLLRFAIILYGLKLNIFDIIGQGSRLLAIDVGVVIFSIVMMLFVNKLLRGDKNIALLLGVGTGVCGAAAIAAVAPIFKSREKDTAISIGIIALIGTIFSLIYTAIYAIFSMTTNVYGAWSGVSLHEIAHVVLAGGFGGSDALKIALLGKLGRVFLLIPLTIVLILIMRFRSSESSSKGRISIPYFLIGFVIMALVNTYVTIPSVLLNILNTVSTICLLMAMVALGLNVAFKDLKNRALKPLMTIIITSICLSSLAFIVVHWLYS.

Helical transmembrane passes span 9 to 26, 31 to 48, 69 to 88, 93 to 115, 122 to 144, 154 to 176, 183 to 202, 217 to 234, 247 to 269, 273 to 295, and 308 to 330; these read FMIG…SFLA, ILDK…AILY, LLRF…DIIG, LLAI…NKLL, ALLL…APIF, SIGI…YAIF, YGAW…LAGG, LGRV…ILIM, ISIP…VTIP, LNIL…GLNV, and LMTI…HWLY.

Belongs to the UPF0324 family.

It is found in the cell membrane. The sequence is that of UPF0324 membrane protein SAR0338 from Staphylococcus aureus (strain MRSA252).